The following is a 421-amino-acid chain: UDP-N-acetylglucosamine 1-carboxyvinyltransferase (421 aa).

Phosphoenolpyruvate is bound at residue 22-23; sequence KN. Arg93 is a binding site for UDP-N-acetyl-alpha-D-glucosamine. The Proton donor role is filled by Cys117. Cys117 carries the post-translational modification 2-(S-cysteinyl)pyruvic acid O-phosphothioketal. UDP-N-acetyl-alpha-D-glucosamine contacts are provided by residues 122 to 126, Asp308, and Ile330; that span reads RPVDL.

The protein belongs to the EPSP synthase family. MurA subfamily.

It is found in the cytoplasm. It catalyses the reaction phosphoenolpyruvate + UDP-N-acetyl-alpha-D-glucosamine = UDP-N-acetyl-3-O-(1-carboxyvinyl)-alpha-D-glucosamine + phosphate. Its pathway is cell wall biogenesis; peptidoglycan biosynthesis. Functionally, cell wall formation. Adds enolpyruvyl to UDP-N-acetylglucosamine. The polypeptide is UDP-N-acetylglucosamine 1-carboxyvinyltransferase (Pseudomonas entomophila (strain L48)).